A 254-amino-acid chain; its full sequence is Thiazole synthase (254 aa).

Catalysis depends on Lys95, which acts as the Schiff-base intermediate with DXP. 1-deoxy-D-xylulose 5-phosphate-binding positions include Gly156, 182–183 (AG), and 204–205 (NT).

It belongs to the ThiG family. As to quaternary structure, homotetramer. Forms heterodimers with either ThiH or ThiS.

Its subcellular location is the cytoplasm. The enzyme catalyses [ThiS sulfur-carrier protein]-C-terminal-Gly-aminoethanethioate + 2-iminoacetate + 1-deoxy-D-xylulose 5-phosphate = [ThiS sulfur-carrier protein]-C-terminal Gly-Gly + 2-[(2R,5Z)-2-carboxy-4-methylthiazol-5(2H)-ylidene]ethyl phosphate + 2 H2O + H(+). The protein operates within cofactor biosynthesis; thiamine diphosphate biosynthesis. Catalyzes the rearrangement of 1-deoxy-D-xylulose 5-phosphate (DXP) to produce the thiazole phosphate moiety of thiamine. Sulfur is provided by the thiocarboxylate moiety of the carrier protein ThiS. In vitro, sulfur can be provided by H(2)S. This Shewanella sp. (strain MR-7) protein is Thiazole synthase.